Reading from the N-terminus, the 204-residue chain is MVSVELLRVDPLTAARRLLGAVLTCRGVSATVVEVEAYGGPPDGPWPDAAAHSYRGPGPRNQVMFGPAGRLYTYRSHGIHVCANVACADDGVAAAVLLRAAVIESGHDVVQRRRGEAVRESAFARGPGNLCSALGITMADNGIDVFAEDSPVHLRLGEEQPCIAGPRVGVSKAADRPWRLWLAGRPEVSAYRRSPRAPAPGGSD.

Belongs to the DNA glycosylase MPG family.

This chain is Putative 3-methyladenine DNA glycosylase, found in Mycobacterium sp. (strain KMS).